A 504-amino-acid polypeptide reads, in one-letter code: Histidine ammonia-lyase (504 aa).

The segment at residues 142-144 (ASG) is a cross-link (5-imidazolinone (Ala-Gly)). Position 143 is a 2,3-didehydroalanine (Ser) (serine 143).

The protein belongs to the PAL/histidase family. In terms of processing, contains an active site 4-methylidene-imidazol-5-one (MIO), which is formed autocatalytically by cyclization and dehydration of residues Ala-Ser-Gly.

The protein localises to the cytoplasm. It carries out the reaction L-histidine = trans-urocanate + NH4(+). Its pathway is amino-acid degradation; L-histidine degradation into L-glutamate; N-formimidoyl-L-glutamate from L-histidine: step 1/3. This Staphylococcus aureus (strain MSSA476) protein is Histidine ammonia-lyase.